Consider the following 113-residue polypeptide: UPF0342 protein MGAS2096_Spy0691 (113 aa).

The protein belongs to the UPF0342 family.

The sequence is that of UPF0342 protein MGAS2096_Spy0691 from Streptococcus pyogenes serotype M12 (strain MGAS2096).